A 278-amino-acid chain; its full sequence is Diaminopimelate epimerase (278 aa).

Residues Asn13, Gln46, and Asn67 each coordinate substrate. Cys76 serves as the catalytic Proton donor. Residues 77–78 (GN), Asn160, Asn193, and 211–212 (ER) each bind substrate. The Proton acceptor role is filled by Cys220. 221–222 (GT) lines the substrate pocket.

Belongs to the diaminopimelate epimerase family. Homodimer.

It is found in the cytoplasm. The catalysed reaction is (2S,6S)-2,6-diaminopimelate = meso-2,6-diaminopimelate. It participates in amino-acid biosynthesis; L-lysine biosynthesis via DAP pathway; DL-2,6-diaminopimelate from LL-2,6-diaminopimelate: step 1/1. In terms of biological role, catalyzes the stereoinversion of LL-2,6-diaminopimelate (L,L-DAP) to meso-diaminopimelate (meso-DAP), a precursor of L-lysine and an essential component of the bacterial peptidoglycan. This chain is Diaminopimelate epimerase, found in Thioalkalivibrio sulfidiphilus (strain HL-EbGR7).